The sequence spans 331 residues: UPF0324 membrane protein YdhF (331 aa).

Helical transmembrane passes span 2–20 (SILP…SYLL), 24–46 (IFHS…NLYF), 82–104 (LGFS…VLFM), 114–136 (VSAL…VEPV), 148–170 (IAMV…TWMF), 204–226 (TLAT…YFGF), 247–269 (SFLP…IHFV), and 308–330 (LIYG…SLLI).

It belongs to the UPF0324 family.

It localises to the cell membrane. The protein is UPF0324 membrane protein YdhF (ydhF) of Lactococcus lactis subsp. lactis (strain IL1403) (Streptococcus lactis).